Consider the following 667-residue polypeptide: Transcription factor 4 (667 aa).

Residues 1–83 form an essential for MYOD1 inhibition region; sequence MHHQQRMAAL…GTPYDHMTSR (83 aa). A 9aaTAD motif is present at residues 18–26; sequence DLLDFSAMF. Disordered stretches follow at residues 24-245, 263-321, 336-379, 466-570, and 634-667; these read AMFS…LGNS, LSYP…SQTG, HTNN…EGPL, SLLP…MANN, and KRRE…MGQM. The segment covering 29–49 has biased composition (polar residues); it reads PVSSGKNGPTSLASGHFTGSN. A phosphoserine mark is found at Ser-66, Ser-87, and Ser-92. 4 stretches are compositionally biased toward polar residues: residues 107–126, 137–155, 205–216, and 266–306; these read GSYS…QQSL, GTLS…SSNN, KPATSTFPSSFF, and PSHS…TDSI. Over residues 337–348 the composition is skewed to low complexity; it reads TNNSFSSNPSTP. The segment covering 365–374 has biased composition (polar residues); sequence NGGQASSSPN. Ser-372 bears the Phosphoserine mark. The segment at 379 to 400 is leucine-zipper; that stretch reads LHSLQSRIEDRLERLDDAIHVL. Composition is skewed to low complexity over residues 467–480 and 503–512; these read LLPN…LPVQ and GQSVSSGSSE. At Ser-515 the chain carries Phosphoserine. Composition is skewed to basic and acidic residues over residues 527–542 and 555–570; these read KSSE…KDIK and PEQK…MANN. The bHLH domain maps to 564–617; sequence ERRMANNARERLRVRDINEAFKELGRMVQLHLKSDKPQTKLLILHQAVAVILSL. The class A specific domain stretch occupies residues 619–642; it reads QQVRERNLNPKAACLKRREEEKVS.

In terms of assembly, efficient DNA binding requires dimerization with another bHLH protein. Forms homo- or heterooligomers with myogenin. Interacts with HIVEP2. Interacts with NEUROD2. Interacts with AGBL1. Interacts with BHLHA9. Expressed in adult heart, brain, placenta, skeletal muscle and to a lesser extent in the lung. In developing embryonic tissues, expression mostly occurs in the brain.

It localises to the nucleus. Transcription factor that binds to the immunoglobulin enhancer Mu-E5/KE5-motif. Involved in the initiation of neuronal differentiation. Activates transcription by binding to the E box (5'-CANNTG-3'). Binds to the E-box present in the somatostatin receptor 2 initiator element (SSTR2-INR) to activate transcription. Preferentially binds to either 5'-ACANNTGT-3' or 5'-CCANNTGG-3'. In Homo sapiens (Human), this protein is Transcription factor 4 (TCF4).